The primary structure comprises 773 residues: Mitochondrial 15S rRNA processing factor CCM1 (773 aa).

The transit peptide at 1–23 (MLRARLLVPLVRPALVHRLDRCY) directs the protein to the mitochondrion. A compositionally biased stretch (basic and acidic residues) spans 89–106 (AAEATEQHKELPPAEQER). The segment at 89-122 (AAEATEQHKELPPAEQERPSGANTHTAPIKHDTK) is disordered. PPR repeat units lie at residues 220–254 (SAITYGQVMLGYAEDGNVEKVEERFRQMIDNNITP), 255–285 (TVHTYAHRLKACDKRGDLKQAMEIFDDLKLA), 294–328 (NQVIFTTLISTSLRNHKVELASQIFEYMKYASLET), 331–365 (TAHTYNSLITASAIRSNTERALDLFEEMKQKSVAN), and 366–400 (VRTYQSLILACLRQEKYHLKAWELLLELREQHSES).

It belongs to the CCM1 family. In terms of assembly, binds to mitochondrial small subunit 15S rRNA.

It localises to the mitochondrion. Regulates mitochondrial small subunit maturation by controlling 15S rRNA 5'-end processing. Localizes to the 5' precursor of the 15S rRNA in a position that is subsequently occupied by mS47 in the mature yeast mtSSU. Uses structure and sequence-specific RNA recognition, binding to a single-stranded region of the precursor and specifically recognizing bases -6 to -1. The exchange of Ccm1 for mS47 is coupled to the irreversible removal of precursor rRNA that is accompanied by conformational changes of the mitoribosomal proteins uS5m and mS26. These conformational changes signal completion of 5'-end rRNA processing through protection of the mature 5'-end of the 15S rRNA and stabilization of mS47. The removal of the 5' precursor together with the dissociation of Ccm1 may be catalyzed by the 5'-3' exoribonuclease Pet127. Involved in the specific removal of group I introns in mitochondrial encoded transcripts. This is Mitochondrial 15S rRNA processing factor CCM1 (CCM1) from Yarrowia lipolytica (strain CLIB 122 / E 150) (Yeast).